The following is a 388-amino-acid chain: DNA replication and repair protein RecF (388 aa).

Glycine 30–serine 37 is an ATP binding site.

It belongs to the RecF family.

The protein resides in the cytoplasm. Its function is as follows. The RecF protein is involved in DNA metabolism; it is required for DNA replication and normal SOS inducibility. RecF binds preferentially to single-stranded, linear DNA. It also seems to bind ATP. The protein is DNA replication and repair protein RecF of Picosynechococcus sp. (strain ATCC 27264 / PCC 7002 / PR-6) (Agmenellum quadruplicatum).